A 206-amino-acid polypeptide reads, in one-letter code: Small ribosomal subunit protein uS4 (206 aa).

The S4 RNA-binding domain maps to glycine 96–lysine 156.

Belongs to the universal ribosomal protein uS4 family. As to quaternary structure, part of the 30S ribosomal subunit. Contacts protein S5. The interaction surface between S4 and S5 is involved in control of translational fidelity.

One of the primary rRNA binding proteins, it binds directly to 16S rRNA where it nucleates assembly of the body of the 30S subunit. Its function is as follows. With S5 and S12 plays an important role in translational accuracy. The polypeptide is Small ribosomal subunit protein uS4 (Haemophilus influenzae (strain 86-028NP)).